The primary structure comprises 355 residues: Heat-inducible transcription repressor HrcA (355 aa).

Belongs to the HrcA family.

Negative regulator of class I heat shock genes (grpE-dnaK-dnaJ and groELS operons). Prevents heat-shock induction of these operons. The protein is Heat-inducible transcription repressor HrcA of Nitratidesulfovibrio vulgaris (strain ATCC 29579 / DSM 644 / CCUG 34227 / NCIMB 8303 / VKM B-1760 / Hildenborough) (Desulfovibrio vulgaris).